Here is a 351-residue protein sequence, read N- to C-terminus: Peptidyl-Lys metalloendopeptidase (351 aa).

An N-terminal signal peptide occupies residues 1-22 (MFSLSSRFFLYSLCLSAVAVSA). Positions 23–183 (APGLSLSLSG…VARRSNLGKR (161 aa)) are excised as a propeptide. 2 disulfides stabilise this stretch: Cys-189/Cys-259 and Cys-261/Cys-281. Residue His-301 coordinates Zn(2+). Glu-302 is a catalytic residue. Zn(2+) contacts are provided by His-305 and Asp-314.

This sequence belongs to the peptidase M35 family. Zn(2+) serves as cofactor.

The protein resides in the secreted. The catalysed reaction is Preferential cleavage in proteins: -Xaa-|-Lys- (in which Xaa may be Pro).. Inhibited by chelating agents such as imidazole, alpha,alpha'-bipyridine, and 1,10-phenanthroline. This chain is Peptidyl-Lys metalloendopeptidase (MEP), found in Armillaria mellea (Honey mushroom).